The chain runs to 1027 residues: D-2-hydroxyglutarate dehydrogenase (1027 aa).

Positions 48-284 (YQQLPQAILF…CEAKLNLLLI (237 aa)) constitute an FAD-binding PCMH-type domain. (R)-2-hydroxyglutarate is bound by residues Arg405 and His503. Residues 665–696 (HEVKAAMDTCLACKACASQCPIKIDVPSFRAK) form the 4Fe-4S ferredoxin-type domain. Cys674, Cys677, Cys680, and Cys684 together coordinate [4Fe-4S] cluster.

This sequence in the N-terminal section; belongs to the FAD-binding oxidoreductase/transferase type 4 family. As to quaternary structure, homotetramer. It depends on [4Fe-4S] cluster as a cofactor. FAD is required as a cofactor.

It carries out the reaction (R)-2-hydroxyglutarate + A = 2-oxoglutarate + AH2. Its function is as follows. Catalyzes the oxidation of D-2-hydroxyglutarate (D-2-HGA) to 2-oxoglutarate. Provides the way to recycle D-2-HGA produced during L-serine synthesis by SerA, by converting it back to 2-oxoglutarate. The physiological molecule that functions as the primary electron acceptor during D-2-HGA oxidation is unknown. The sequence is that of D-2-hydroxyglutarate dehydrogenase from Haemophilus influenzae (strain ATCC 51907 / DSM 11121 / KW20 / Rd).